A 541-amino-acid chain; its full sequence is MVADPPKGDPKGLAAVEPTANGAPAQDPLEDSGAAVGRCCSSRDQVRRCLRANLLVLLTVVAVVAGVALGLAVSGAGGALALGPARLIAFAFPGELLLRLLKMIILPLVVCSLVGGAASLDPSALGRLGAWALLFFLVTTLLASALGVGLALALQPGAAFAAMNASLSSTGAVEQTPSKQVLDSFLDLLRNIFPSNLVSAAFRSYSTSYEEKNFNGTLVKVPVAHEEEGMNILGLVVFAIVFGVALRKLGPEGEPLIRFFNSFNDATMVLVSWIMWYAPVGILFLVASKIVEMDDVGVLFASLGKYILCCLLGHAIHGLLVLPLIYFLFTRKNPYRFLWGILTPLAMAFGTSSSSATLPLMMKCVEERNGVAKHISRFVLPIGATVNMDGAALFQCVAAVFIAQLNRQSLDFVKIITILVTATASSVGAAGIPAGGVLTLAIILEAVSLPVSEISLILAVDWLVDRSCTIINVEGDAFGAGLLQHYVDRTEQRGSEPELTQVKSEVPLGSLPAPNEEGNPLLRHSPGAAGDAGACEKESVM.

Methionine 1 carries the post-translational modification N-acetylmethionine. Over residues methionine 1–proline 10 the composition is skewed to basic and acidic residues. The disordered stretch occupies residues methionine 1–serine 32. Residues methionine 1–alanine 52 are Cytoplasmic-facing. A helical transmembrane segment spans residues asparagine 53–leucine 82. Residues glycine 83–glutamate 95 lie on the Extracellular side of the membrane. The helical transmembrane segment at leucine 96–alanine 117 threads the bilayer. Residues alanine 118 to tryptophan 131 lie on the Cytoplasmic side of the membrane. A helical transmembrane segment spans residues alanine 132 to leucine 154. Over glutamine 155–histidine 225 the chain is Extracellular. N-linked (GlcNAc...) asparagine glycosylation is found at asparagine 164 and asparagine 215. A helical transmembrane segment spans residues glutamate 226–leucine 249. At glycine 250–arginine 258 the chain is on the cytoplasmic side. A helical membrane pass occupies residues phenylalanine 259–valine 286. The Extracellular segment spans residues alanine 287–isoleucine 307. The chain crosses the membrane as a helical span at residues leucine 308–phenylalanine 329. Residues threonine 330 to proline 334 lie on the Cytoplasmic side of the membrane. Residues tyrosine 335 to valine 365 constitute an intramembrane region (discontinuously helical). The Cytoplasmic portion of the chain corresponds to glutamate 366 to histidine 374. Residues isoleucine 375–phenylalanine 401 traverse the membrane as a helical segment. Na(+) is bound by residues glycine 383, threonine 385, and asparagine 387. The Extracellular portion of the chain corresponds to isoleucine 402–lysine 414. The segment at residues isoleucine 415 to serine 448 is an intramembrane region (discontinuously helical). The Extracellular segment spans residues leucine 449 to aspartate 461. A helical membrane pass occupies residues tryptophan 462–leucine 483. 2 residues coordinate Na(+): asparagine 472 and aspartate 476. The Cytoplasmic portion of the chain corresponds to glutamine 484–methionine 541. The interval arginine 493–methionine 541 is disordered. 3 positions are modified to phosphoserine: serine 495, serine 504, and serine 539.

Belongs to the dicarboxylate/amino acid:cation symporter (DAACS) (TC 2.A.23) family. SLC1A5 subfamily. As to quaternary structure, homotrimer.

It localises to the cell membrane. Its subcellular location is the melanosome. It catalyses the reaction L-glutamine(out) + L-serine(in) + Na(+)(out) = L-glutamine(in) + L-serine(out) + Na(+)(in). The catalysed reaction is L-glutamine(in) + L-serine(out) + Na(+)(out) = L-glutamine(out) + L-serine(in) + Na(+)(in). The enzyme catalyses L-threonine(in) + L-glutamine(out) + Na(+)(out) = L-threonine(out) + L-glutamine(in) + Na(+)(in). It carries out the reaction L-threonine(out) + L-glutamine(in) + Na(+)(out) = L-threonine(in) + L-glutamine(out) + Na(+)(in). It catalyses the reaction L-asparagine(in) + L-glutamine(out) + Na(+)(out) = L-asparagine(out) + L-glutamine(in) + Na(+)(in). The catalysed reaction is L-asparagine(out) + L-glutamine(in) + Na(+)(out) = L-asparagine(in) + L-glutamine(out) + Na(+)(in). The enzyme catalyses L-glutamine(in) + L-alanine(out) + Na(+)(out) = L-glutamine(out) + L-alanine(in) + Na(+)(in). It carries out the reaction L-valine(out) + L-glutamine(in) + Na(+)(out) = L-valine(in) + L-glutamine(out) + Na(+)(in). It catalyses the reaction L-glutamine(in) + L-methionine(out) + Na(+)(out) = L-glutamine(out) + L-methionine(in) + Na(+)(in). The catalysed reaction is L-glutamine(in) + L-glutamate(out) + Na(+)(out) + H(+)(out) = L-glutamine(out) + L-glutamate(in) + Na(+)(in) + H(+)(in). The enzyme catalyses D-serine(in) + L-glutamine(out) + Na(+)(out) = D-serine(out) + L-glutamine(in) + Na(+)(in). It carries out the reaction D-serine(in) + L-alanine(out) + Na(+)(out) = D-serine(out) + L-alanine(in) + Na(+)(in). It catalyses the reaction nitrate(in) = nitrate(out). The catalysed reaction is iodide(out) = iodide(in). The enzyme catalyses thiocyanate(in) = thiocyanate(out). Sodium-coupled antiporter of neutral amino acids. In a tri-substrate transport cycle, exchanges neutral amino acids between the extracellular and intracellular compartments, coupled to the inward cotransport of at least one sodium ion. The preferred substrate is the essential amino acid L-glutamine, a precursor for biosynthesis of proteins, nucleotides and amine sugars as well as an alternative fuel for mitochondrial oxidative phosphorylation. Exchanges L-glutamine with other neutral amino acids such as L-serine, L-threonine and L-asparagine in a bidirectional way. Provides L-glutamine to proliferating stem and activated cells driving the metabolic switch toward cell differentiation. The transport cycle is usually pH-independent, with the exception of L-glutamate. Transports extracellular L-glutamate coupled to the cotransport of one proton and one sodium ion in exchange for intracellular L-glutamine counter-ion. May provide for L-glutamate uptake in glial cells regulating glutamine/glutamate cycle in the nervous system. Can transport D-amino acids. Mediates D-serine release from the retinal glia potentially affecting NMDA receptor function in retinal neurons. Displays sodium- and amino acid-dependent but uncoupled channel-like anion conductance with a preference SCN(-) &gt;&gt; NO3(-) &gt; I(-) &gt; Cl(-). Through binding of the fusogenic protein syncytin-1/ERVW-1 may mediate trophoblasts syncytialization, the spontaneous fusion of their plasma membranes, an essential process in placental development. The polypeptide is Neutral amino acid transporter B(0) (SLC1A5) (Oryctolagus cuniculus (Rabbit)).